A 235-amino-acid chain; its full sequence is MAEKVNNFPPLPKFIPLKPCFYQDFEADIPPQHLSLTKRLYYLWMLNSVTLAVNLVGCLAWLIGGGGATNFGLAFLWLILFTPCSYVCWFRPIYKAFKTDSSFSFMAFFFTFMAQLVISIIQAVGIPGWGVCGWIATISFFGTNIGSAVVMLIPTVMFTVVAVFSFIALSMVHKFYRGSGGSFSKAQEEWTTGAWKNPHVQQAAQNAAMGAAQGAMNQPQTQYSATPNYTYSNEM.

The Cytoplasmic portion of the chain corresponds to 1-39; that stretch reads MAEKVNNFPPLPKFIPLKPCFYQDFEADIPPQHLSLTKR. Residues 40-60 traverse the membrane as a helical segment; the sequence is LYYLWMLNSVTLAVNLVGCLA. Over 61 to 67 the chain is Extracellular; that stretch reads WLIGGGG. Residues 68–88 form a helical membrane-spanning segment; the sequence is ATNFGLAFLWLILFTPCSYVC. At 89-102 the chain is on the cytoplasmic side; sequence WFRPIYKAFKTDSS. A helical membrane pass occupies residues 103–125; that stretch reads FSFMAFFFTFMAQLVISIIQAVG. The Extracellular segment spans residues 126–148; it reads IPGWGVCGWIATISFFGTNIGSA. The chain crosses the membrane as a helical span at residues 149–169; it reads VVMLIPTVMFTVVAVFSFIAL. Residues 170-235 lie on the Cytoplasmic side of the membrane; sequence SMVHKFYRGS…TPNYTYSNEM (66 aa).

The protein belongs to the SCAMP family. SCAMP5 subfamily. Interacts (via C-terminal part) with SYT1 and SYT2; interaction with synaptotagmins making a link with the SNARE molecules. Interacts with SLC9A7. As to expression, brain-specific.

The protein localises to the cell membrane. The protein resides in the golgi apparatus membrane. Its subcellular location is the golgi apparatus. It localises to the trans-Golgi network membrane. It is found in the recycling endosome membrane. The protein localises to the cytoplasmic vesicle. The protein resides in the secretory vesicle. Its subcellular location is the synaptic vesicle membrane. Required for the calcium-dependent exocytosis of signal sequence-containing cytokines such as CCL5. Probably acts in cooperation with the SNARE machinery. This is Secretory carrier-associated membrane protein 5 (Scamp5) from Mus musculus (Mouse).